Here is a 175-residue protein sequence, read N- to C-terminus: Ribosome maturation factor RimM (175 aa).

The 80-residue stretch at 96-175 (EEDYYWHDLI…TITVDWDAGF (80 aa)) folds into the PRC barrel domain.

Belongs to the RimM family. In terms of assembly, binds ribosomal protein uS19.

The protein localises to the cytoplasm. Functionally, an accessory protein needed during the final step in the assembly of 30S ribosomal subunit, possibly for assembly of the head region. Essential for efficient processing of 16S rRNA. May be needed both before and after RbfA during the maturation of 16S rRNA. It has affinity for free ribosomal 30S subunits but not for 70S ribosomes. The protein is Ribosome maturation factor RimM of Haemophilus ducreyi (strain 35000HP / ATCC 700724).